A 585-amino-acid chain; its full sequence is Butyrophilin subfamily 3 member A3 (585 aa).

A signal peptide spans 1–29 (MKMASSLACLLLNFHVSVFLVQLLTPCSA). Ig-like V-type domains follow at residues 30–139 (QFSV…KALV) and 145–236 (ALGS…ASIS). Over 30-248 (QFSVLGPSGP…DPFFTSAQPW (219 aa)) the chain is Extracellular. Intrachain disulfides connect Cys52–Cys126 and Cys166–Cys220. N-linked (GlcNAc...) asparagine glycosylation occurs at Asn115. A helical membrane pass occupies residues 249–269 (IAALAGTLPISLLLLAGASYF). At 270–585 (LWRQQKEKIA…KPQACTEALY (316 aa)) the chain is on the cytoplasmic side. Positions 322–518 (RGEKSLAYHE…LTICPTPKEV (197 aa)) constitute a B30.2/SPRY domain. The segment at 560–585 (AGAEGVSPSTTTSQNHKPQACTEALY) is disordered. A compositionally biased stretch (polar residues) spans 566-576 (SPSTTTSQNHK).

The protein belongs to the immunoglobulin superfamily. BTN/MOG family.

The protein localises to the membrane. This is Butyrophilin subfamily 3 member A3 (BTN3A3) from Pongo abelii (Sumatran orangutan).